Here is a 209-residue protein sequence, read N- to C-terminus: Cyclin-dependent kinase inhibitor 2 (209 aa).

The tract at residues 1–32 is required for nuclear localization; it reads MAAVRRRERDVVEENGVTTTTVKRRKMEEEVD.

It belongs to the CDI family. ICK/KRP subfamily. Specifically interacts with CDKA-1, but not with CDKB1-1. Post-translationally, phosphorylated.

It localises to the nucleus. The protein localises to the nucleoplasm. In terms of biological role, binds and inhibits CYCD2-1/CDKA-1 complex kinase activity. Regulates cell division which is crucial for plant growth, development and morphogenesis. May regulate early lateral root initiation by blocking the G1/S phase transition. Controls the mitosis-to-endocycle transition and the onset of the endoreduplication cycle during leaf development through inhibition of mitotic CDKA-1 kinase complexes. Specifically targets CDKA-1. The chain is Cyclin-dependent kinase inhibitor 2 (KRP2) from Arabidopsis thaliana (Mouse-ear cress).